The following is a 352-amino-acid chain: Phenylalanine--tRNA ligase alpha subunit (352 aa).

Mg(2+) is bound at residue Glu258.

The protein belongs to the class-II aminoacyl-tRNA synthetase family. Phe-tRNA synthetase alpha subunit type 1 subfamily. In terms of assembly, tetramer of two alpha and two beta subunits. Mg(2+) is required as a cofactor.

It localises to the cytoplasm. It carries out the reaction tRNA(Phe) + L-phenylalanine + ATP = L-phenylalanyl-tRNA(Phe) + AMP + diphosphate + H(+). The protein is Phenylalanine--tRNA ligase alpha subunit of Staphylococcus aureus (strain bovine RF122 / ET3-1).